A 382-amino-acid polypeptide reads, in one-letter code: Succinyl-diaminopimelate desuccinylase (382 aa).

Residue His-71 coordinates Zn(2+). Asp-73 is a catalytic residue. Asp-105 contacts Zn(2+). The active-site Proton acceptor is the Glu-139. Residues Glu-140, Glu-168, and His-354 each contribute to the Zn(2+) site.

Belongs to the peptidase M20A family. DapE subfamily. Homodimer. Requires Zn(2+) as cofactor. The cofactor is Co(2+).

The enzyme catalyses N-succinyl-(2S,6S)-2,6-diaminopimelate + H2O = (2S,6S)-2,6-diaminopimelate + succinate. It functions in the pathway amino-acid biosynthesis; L-lysine biosynthesis via DAP pathway; LL-2,6-diaminopimelate from (S)-tetrahydrodipicolinate (succinylase route): step 3/3. Functionally, catalyzes the hydrolysis of N-succinyl-L,L-diaminopimelic acid (SDAP), forming succinate and LL-2,6-diaminopimelate (DAP), an intermediate involved in the bacterial biosynthesis of lysine and meso-diaminopimelic acid, an essential component of bacterial cell walls. This Stutzerimonas stutzeri (strain A1501) (Pseudomonas stutzeri) protein is Succinyl-diaminopimelate desuccinylase.